The sequence spans 33 residues: Cytochrome b6-f complex subunit 5 (33 aa).

The helical transmembrane segment at Leu5–Ala25 threads the bilayer.

This sequence belongs to the PetG family. In terms of assembly, the 4 large subunits of the cytochrome b6-f complex are cytochrome b6, subunit IV (17 kDa polypeptide, PetD), cytochrome f and the Rieske protein, while the 4 small subunits are PetG, PetL, PetM and PetN. The complex functions as a dimer.

It is found in the plastid. Its subcellular location is the chloroplast thylakoid membrane. Its function is as follows. Component of the cytochrome b6-f complex, which mediates electron transfer between photosystem II (PSII) and photosystem I (PSI), cyclic electron flow around PSI, and state transitions. PetG is required for either the stability or assembly of the cytochrome b6-f complex. This is Cytochrome b6-f complex subunit 5 from Bigelowiella natans (Pedinomonas minutissima).